The sequence spans 165 residues: Transcriptional repressor NrdR (165 aa).

Residues cysteine 3–cysteine 34 fold into a zinc finger. An ATP-cone domain is found at proline 49–glutamine 139.

This sequence belongs to the NrdR family. It depends on Zn(2+) as a cofactor.

Its function is as follows. Negatively regulates transcription of bacterial ribonucleotide reductase nrd genes and operons by binding to NrdR-boxes. The sequence is that of Transcriptional repressor NrdR from Methylococcus capsulatus (strain ATCC 33009 / NCIMB 11132 / Bath).